Here is a 228-residue protein sequence, read N- to C-terminus: Protein crossbronx homolog (228 aa).

In terms of domain architecture, UBC core spans 14 to 168 (LQEYKILAEY…VEQCVEDSQR (155 aa)).

This sequence belongs to the ubiquitin-conjugating enzyme family. FTS subfamily.

The sequence is that of Protein crossbronx homolog from Anopheles gambiae (African malaria mosquito).